A 298-amino-acid polypeptide reads, in one-letter code: uncharacterized protein (298 aa).

Positions 1 to 61 constitute an HTH lysR-type domain; the sequence is MDIFISKKMR…TRKDNNISLN (61 aa). Positions 21-40 form a DNA-binding region, H-T-H motif; it reads IARAAEKIHMTASPFGKSIA.

Belongs to the LysR transcriptional regulatory family.

This is an uncharacterized protein from Escherichia coli (strain K12).